Reading from the N-terminus, the 592-residue chain is Keratin, type II cytoskeletal 5 (592 aa).

Residues 1–18 (MSRQSSVSFRSGGSRSFS) show a composition bias toward low complexity. Residues 1 to 20 (MSRQSSVSFRSGGSRSFSTA) form a disordered region. Positions 1–169 (MSRQSSVSFR…DPSIQRVRTE (169 aa)) are head. Phosphoserine occurs at positions 5, 8, 16, and 21. A Phosphothreonine; by CDK1 modification is found at threonine 24. Residues serine 26, serine 36, serine 50, serine 64, serine 71, serine 75, and serine 82 each carry the phosphoserine modification. Phosphothreonine; by CDK1 is present on threonine 153. Threonine 168 is modified (phosphothreonine; by AURKB). The segment at 170–205 (EREQIKTLNNKFASFIDKVRFLEQQNKVLDTKWTLL) is coil 1A. The IF rod domain maps to 170–483 (EREQIKTLNN…KLLEGEECRL (314 aa)). The segment at 206–224 (QEQGTKTVRQNLEPLFEQY) is linker 1. Residues 225–317 (INNLRRQLDS…FFDAELSQMQ (93 aa)) form a coil 1B region. The segment at 318–340 (THVSDTSVVLSMDNNRNLDLDSI) is linker 12. A coil 2 region spans residues 341–479 (IAEVKAQYEE…ATYRKLLEGE (139 aa)). Residues 480–592 (ECRLSGEGVG…TSSSRKSFKS (113 aa)) are tail. The interval 568–592 (GSGGGSSSSVKFVSTTSSSRKSFKS) is disordered. Over residues 574 to 592 (SSSVKFVSTTSSSRKSFKS) the composition is skewed to low complexity.

It belongs to the intermediate filament family. In terms of assembly, heterodimer of a type I and a type II keratin. Heterodimer with type I keratin KRT25 leading to the formation of keratin intermediate filament (KIF) network. Forms a heterodimer (via 2B domains) with KRT14 (via 2B domains). Interacts with TCHP. Interacts with EPPK1. Interacts with AMELX. Interacts with PKP1 (via N-terminus) and PKP2. Phosphorylated by CDK1, AURKB and Rho-kinase, phosphorylation is regulated by the cell cycle. Thr-24 phosphorylation, mediated by CDK1, peaks during prometaphase or metaphase cells with phosphorylated filamentous structures evident throughout the cytoplasm during early mitosis. CDK1 phosphorylates Thr-24 in mitotic cells at the site of injury. In terms of processing, O-glycosylated.

It localises to the cytoplasm. Functionally, required for the formation of keratin intermediate filaments in the basal epidermis and maintenance of the skin barrier in response to mechanical stress. Regulates the recruitment of Langerhans cells to the epidermis, potentially by modulation of the abundance of macrophage chemotactic cytokines, macrophage inflammatory cytokines and CTNND1 localization in keratinocytes. The chain is Keratin, type II cytoskeletal 5 (KRT5) from Pan troglodytes (Chimpanzee).